The following is a 559-amino-acid chain: Poly(U)-binding-splicing factor PUF60 (559 aa).

The tract at residues 1-516 is inhibits homodimerization; that stretch reads MATATIALQV…EDAEIIVKIF (516 aa). Glycyl lysine isopeptide (Lys-Gly) (interchain with G-Cter in SUMO2) cross-links involve residues Gln-14 and Lys-43. Thr-60 is modified (phosphothreonine). Residues 77–559 are inhibits transcriptional repression, interaction with ERCC3 and apoptosis induction; the sequence is QSIKSVLVKQ…ERFDNSDLSA (483 aa). Lys-80 is covalently cross-linked (Glycyl lysine isopeptide (Lys-Gly) (interchain with G-Cter in SUMO2)). Phosphoserine is present on Ser-112. RRM domains lie at 129–207 and 226–304; these read CRVY…RPSN and NRIY…KAVT. The residue at position 244 (Ser-244) is a Phosphoserine. At Lys-251 the chain carries N6-acetyllysine. A Phosphothreonine modification is found at Thr-314. The interval 416 to 437 is disordered; sequence KKEKEEEELFPESERPEMLSEQ. Lys-419 is covalently cross-linked (Glycyl lysine isopeptide (Lys-Gly) (interchain with G-Cter in SUMO2)). Residues 427–437 show a composition bias toward basic and acidic residues; the sequence is ESERPEMLSEQ. At Lys-454 the chain carries N6-acetyllysine. Lys-458 participates in a covalent cross-link: Glycyl lysine isopeptide (Lys-Gly) (interchain with G-Cter in SUMO2). One can recognise an RRM 3; atypical domain in the interval 462 to 549; sequence TVMVLRNMVD…RKVVAEVYDQ (88 aa).

This sequence belongs to the RRM half pint family. As to quaternary structure, homodimer. Associates with the spliceosome. Found in a complex with RO60 and Y5 RNA. Found in a complex with FUBP1 and far upstream element (FUSE) DNA segment. Interacts directly with ERCC3. Interacts with CDK7 and GTF2H1. Interacts with SRSF11/P54. Does not interact with ERCC3 in xeroderma pigmentosum complementation group B (XPB) cells. Interacts with ARGLU1; interaction may be involved in ARGLU1-mediated modulation of alternative splicing. Isoform 2 is expressed in colonic epithelium and colorectal epithelium cancer (at protein level). Isoform 6 is expressed in colorectal epithelial cancer but below detection level in colonic epithelium. Expressed in heart, brain, placenta, lung, liver, skeletal muscle, kidney, pancreas, spleen, thymus, prostate, testis, ovary, small intestine, colon and peripheral blood leukocytes.

It is found in the nucleus. Its function is as follows. DNA- and RNA-binding protein, involved in several nuclear processes such as pre-mRNA splicing, apoptosis and transcription regulation. In association with FUBP1 regulates MYC transcription at the P2 promoter through the core-TFIIH basal transcription factor. Acts as a transcriptional repressor through the core-TFIIH basal transcription factor. Represses FUBP1-induced transcriptional activation but not basal transcription. Decreases ERCC3 helicase activity. Does not repress TFIIH-mediated transcription in xeroderma pigmentosum complementation group B (XPB) cells. Is also involved in pre-mRNA splicing. Promotes splicing of an intron with weak 3'-splice site and pyrimidine tract in a cooperative manner with U2AF2. Involved in apoptosis induction when overexpressed in HeLa cells. Isoform 6 failed to repress MYC transcription and inhibited FIR-induced apoptosis in colorectal cancer. Isoform 6 may contribute to tumor progression by enabling increased MYC expression and greater resistance to apoptosis in tumors than in normal cells. Modulates alternative splicing of several mRNAs. Binds to relaxed DNA of active promoter regions. Binds to the pyrimidine tract and 3'-splice site regions of pre-mRNA; binding is enhanced in presence of U2AF2. Binds to Y5 RNA in association with RO60. Binds to poly(U) RNA. This chain is Poly(U)-binding-splicing factor PUF60, found in Homo sapiens (Human).